A 433-amino-acid polypeptide reads, in one-letter code: Zinc finger and SCAN domain-containing protein 4 (433 aa).

Residues 44-126 (RMVLNSFQDS…RFMEDLTDDS (83 aa)) form the SCAN box domain. Polar residues-rich tracts occupy residues 162–184 (SAQT…TSLE) and 277–298 (QPEQ…NSTC). Disordered stretches follow at residues 162-199 (SAQT…CNSS) and 272-298 (AGCI…NSTC). C2H2-type zinc fingers lie at residues 312-334 (YKCE…QRRH), 340-362 (FVCP…QIIH), 368-390 (FTCS…ERIH), and 396-418 (YTCP…MRTH). Residues 414–433 (HMRTHEKITPPSVPSTPEAS) are disordered.

It localises to the nucleus. Its subcellular location is the chromosome. The protein localises to the telomere. Embryonic stem (ES) cell-specific transcription factor required to regulate ES cell pluripotency. Binds telomeres and plays a key role in genomic stability in ES cells by regulating telomere elongation. Acts as an activator of spontaneous telomere sister chromatid exchange (T-SCE) and telomere elongation in undifferentiated ES cells. In Pongo pygmaeus (Bornean orangutan), this protein is Zinc finger and SCAN domain-containing protein 4 (ZSCAN4).